Reading from the N-terminus, the 87-residue chain is Kappa-bungarotoxin (87 aa).

Residues 1–21 (MKTLLLTLVVVTIVCLDLGYT) form the signal peptide. Cystine bridges form between Cys-24–Cys-42, Cys-35–Cys-63, Cys-48–Cys-52, Cys-67–Cys-79, and Cys-80–Cys-85.

It belongs to the three-finger toxin family. Long-chain subfamily. Kappa-neurotoxin sub-subfamily. In terms of assembly, homodimer and heterodimer; non-covalently linked. As to expression, expressed by the venom gland.

The protein resides in the secreted. Its function is as follows. Postsynaptic neurotoxin that binds and inhibits neuronal nicotinic acetylcholine receptors (nAChR) with high affinity (IC(50)&lt;100 nM). Is a selective, and slowly reversible antagonist of alpha-3/CHRNA3-containing and some alpha-4/CHRNA4-containing AChRs. This Bungarus multicinctus (Many-banded krait) protein is Kappa-bungarotoxin.